The chain runs to 320 residues: Probable arabinan endo-1,5-alpha-L-arabinosidase C (320 aa).

The N-terminal stretch at 1 to 16 is a signal peptide; that stretch reads MYRSTLLFLFIALVNA. Asp-31 serves as the catalytic Proton acceptor. Asn-73, Asn-137, and Asn-191 each carry an N-linked (GlcNAc...) asparagine glycan. Glu-199 (proton donor) is an active-site residue.

This sequence belongs to the glycosyl hydrolase 43 family.

Its subcellular location is the secreted. It carries out the reaction Endohydrolysis of (1-&gt;5)-alpha-arabinofuranosidic linkages in (1-&gt;5)-arabinans.. It participates in glycan metabolism; L-arabinan degradation. Functionally, endo-1,5-alpha-L-arabinanase involved in degradation of pectin. Its preferred substrate is linear 1,5-alpha-L-arabinan. This chain is Probable arabinan endo-1,5-alpha-L-arabinosidase C (abnC), found in Aspergillus terreus (strain NIH 2624 / FGSC A1156).